Consider the following 1152-residue polypeptide: Fork-head transcriptional regulator FHL1 (1152 aa).

Positions 55–147 are disordered; that stretch reads TATNNVLPES…SEDDNNNNNN (93 aa). A compositionally biased stretch (basic and acidic residues) spans 64 to 83; that stretch reads SNKKDKPIDTQDLHEDDPKA. Low complexity predominate over residues 87 to 101; that stretch reads TTSNGESTSNSNSVS. Polar residues predominate over residues 126–135; the sequence is VPVTSNSKSL. In terms of domain architecture, FHA spans 171-229; that stretch reads VVLGRKSNDETLQQNVDVHLSSKKAISRRHAKIFYNFGTQRFEISILGRNGAFVDNVFV. Disordered stretches follow at residues 254–362 and 514–557; these read LPSN…RKNS and KKQL…PPAS. Residues 271–286 are compositionally biased toward polar residues; it reads KQFNPSDAINLRSNLY. Residues 296–307 show a composition bias toward basic residues; the sequence is PKRKPQPSKKVK. Residues 328-358 are compositionally biased toward low complexity; it reads TTAISPTASISTSTNAATAATATTPATTTAA. Coiled-coil stretches lie at residues 449 to 537 and 734 to 777; these read DDDE…SLAK and ELYI…QKSL. Positions 659 to 756 form a DNA-binding region, fork-head; it reads KPNISFQIMI…QREIAKAKAK (98 aa). Disordered regions lie at residues 787-833, 846-867, 951-1010, and 1057-1152; these read ASPY…GTSP, RGNG…MNDP, HEGI…VPQQ, and PAMQ…AKTE. Low complexity-rich tracts occupy residues 804–826, 851–863, and 973–987; these read SQSS…GSTT, TPAT…SLPA, and TTTS…TTPQ. Composition is skewed to pro residues over residues 996 to 1006 and 1072 to 1082; these read VKPPISTPLPQ and TSVPVPLPVPS. 2 stretches are compositionally biased toward polar residues: residues 1115 to 1128 and 1143 to 1152; these read SSLS…SNKP and QATNKIAKTE.

In terms of assembly, interacts with IFH1 and TBF1.

The protein resides in the nucleus. In terms of biological role, in complex with IFH1, acts as a transcriptional regulator of rRNA and ribosomal protein genes. The FHL1-IFH1 complex is targeted to the ribosomal protein genes by the DNA-binding factor TBF1. The protein is Fork-head transcriptional regulator FHL1 (FHL1) of Candida albicans (strain SC5314 / ATCC MYA-2876) (Yeast).